The sequence spans 486 residues: Transcription factor VOZ1 (486 aa).

The segment at 208 to 405 is VOZ; the sequence is PPSAFLGPKC…VDGKKTSKGK (198 aa). Residues Cys-217, Cys-222, Cys-236, and His-240 each coordinate Zn(2+). A C3H1-type; atypical zinc finger spans residues 217 to 240; the sequence is CALWDCPRPAQGFDWFQDYCSSFH. Positions 424-445 are disordered; it reads EFPPENNTTNTTNNNKRCIKGR. Residues 429-438 are compositionally biased toward low complexity; the sequence is NNTTNTTNNN.

Homodimer. Interacts with phytochrome B (phyB). Ubiquitous. Expressed in the vascular bundles of various tissues, specifically in the phloem.

It is found in the cytoplasm. Its subcellular location is the nucleus. In terms of biological role, transcriptional activator acting positively in the phytochrome B signaling pathway. Functions redundantly with VOZ2 to promote flowering downstream of phytochrome B (phyB). Down-regulates 'FLOWERING LOCUS C' (FLC) and up-regulates 'FLOWERING LOCUS T' (FT). Binds to the 38-bp cis-acting region of the AVP1 gene. Interacts with phyB in the cytoplasm and is translocated to the nucleus at signal transmission, where it is subjected to degradation in a phytochrome-dependent manner. This Arabidopsis thaliana (Mouse-ear cress) protein is Transcription factor VOZ1 (VOZ1).